The sequence spans 509 residues: uncharacterized protein (509 aa).

Transmembrane regions (helical) follow at residues Ser14–Pro34, Thr117–Ile137, Glu158–Ile178, Ile188–Phe208, Leu209–Ser229, Ile240–Trp260, Leu303–Gly323, Trp324–Ser344, Ala359–Leu379, Met399–Val419, Ser423–Pro443, Met458–Phe478, and Phe484–Val504.

The protein to E.coli YfcC. It to B.subtilis YcgA.

The protein resides in the cell membrane. This is an uncharacterized protein from Haemophilus influenzae (strain ATCC 51907 / DSM 11121 / KW20 / Rd).